Reading from the N-terminus, the 2214-residue chain is Sortilin-related receptor (2214 aa).

Residues 1-28 form the signal peptide; the sequence is MATRSSRRESRLPFLFTLVALLPPGALC. The propeptide at 29–81 is removed in mature form; that stretch reads EVWTQRLHGGSAPLPQDRGFLVVQGDPRELRLWARGDARGASRADEKPLRRKR. The Cell attachment site motif lies at 63–65; it reads RGD. The Lumenal segment spans residues 82 to 2137; sequence SAALQPEPIK…TQAARSTDVA (2056 aa). Asn-99 carries N-linked (GlcNAc...) asparagine glycosylation. Ser-114 is modified (phosphoserine). The BNR 1 repeat unit spans residues 136–147; that stretch reads YVSYDYGKSFKK. Asn-158 carries N-linked (GlcNAc...) asparagine glycosylation. One copy of the BNR 2 repeat lies at 232–243; it reads WKSDDFGQTWIM. 2 N-linked (GlcNAc...) asparagine glycosylation sites follow: Asn-368 and Asn-430. 3 BNR repeats span residues 441–452, 521–532, and 562–573; these read VITFDKGGTWEF, YISSSAGARWRE, and KYSTNEGETWKT. Asn-616, Asn-674, Asn-818, and Asn-871 each carry an N-linked (GlcNAc...) asparagine glycan. LDL-receptor class B repeat units follow at residues 800–843, 844–887, 888–932, 933–970, and 971–1013; these read NCLY…EPLS, QLLY…VPQE, GVMF…DDQW, IYWTDAYLECIERITFSGQQRSVILDNLPHPYAIAVFK, and NEIY…FYKG. Positions 1026–1072 constitute an EGF-like domain; it reads CSLLCLPKANNSRSCRCPEDVSSSVLPSGDLMCDCPQGYQLKNNTCV. Residues Asn-1035 and Asn-1068 are each glycosylated (N-linked (GlcNAc...) asparagine). LDL-receptor class A domains follow at residues 1076 to 1114, 1115 to 1155, 1156 to 1194, 1198 to 1236, 1238 to 1272, 1273 to 1317, 1323 to 1361, 1366 to 1405, and 1417 to 1455; these read NTCLRNQYRCSNGNCINSIWWCDFDNDCGDMSDERNCPT, TICD…HCEM, HQCRSDEYNCSSGMCIRSSWVCDGDNDCRDWSDEANCTA, TCEASNFQCRNGHCIPQRWACDGDTDCQDGSDEDPVNCE, KCNGFRCPNGTCIPSSKHCDGLRDCSDGSDEQHCE, PLCT…GCSQ, KVCDEFGFQCQNGVCISLIWKCDGMDDCGDYSDEANCEN, PNCSRYFQFRCENGHCIPNRWKCDRENDCGDWSDEKDCGD, and STCLPNYYRCSSGTCVMDTWVCDGYRDCADGSDEEACPL. 21 disulfide bridges follow: Cys-1078/Cys-1090, Cys-1085/Cys-1103, Cys-1097/Cys-1112, Cys-1117/Cys-1131, Cys-1125/Cys-1144, Cys-1138/Cys-1153, Cys-1158/Cys-1170, Cys-1165/Cys-1183, Cys-1177/Cys-1192, Cys-1199/Cys-1211, Cys-1206/Cys-1224, Cys-1218/Cys-1235, Cys-1239/Cys-1249, Cys-1244/Cys-1262, Cys-1256/Cys-1271, Cys-1275/Cys-1289, Cys-1283/Cys-1302, Cys-1296/Cys-1315, Cys-1325/Cys-1337, Cys-1332/Cys-1350, and Cys-1344/Cys-1359. The N-linked (GlcNAc...) asparagine glycan is linked to Asn-1164. Asn-1191 carries N-linked (GlcNAc...) asparagine glycosylation. Asn-1246 carries an N-linked (GlcNAc...) asparagine glycan. Asn-1367 is a glycosylation site (N-linked (GlcNAc...) asparagine). 6 disulfide bridges follow: Cys-1368–Cys-1381, Cys-1376–Cys-1394, Cys-1388–Cys-1403, Cys-1419–Cys-1431, Cys-1426–Cys-1444, and Cys-1438–Cys-1453. N-linked (GlcNAc...) asparagine glycosylation is present at Asn-1458. LDL-receptor class A domains are found at residues 1469-1508 and 1512-1551; these read GRCDRFEFECHQPKTCIPNWKRCDGHQDCQDGRDEANCPT and LTCMSREFQCEDGEACIVLSERCDGFLDCSDESDEKACSD. Cystine bridges form between Cys-1471–Cys-1484, Cys-1478–Cys-1497, Cys-1491–Cys-1506, Cys-1514–Cys-1527, Cys-1521–Cys-1540, and Cys-1534–Cys-1549. Fibronectin type-III domains follow at residues 1557 to 1649, 1653 to 1745, 1749 to 1844, 1843 to 1927, 1934 to 2029, and 2030 to 2118; these read KVQN…TPEG, APRN…TIKG, PPPD…VRPP, PPAP…VVKM, PPRH…APDA, and LKII…LYDE. N-linked (GlcNAc...) asparagine glycosylation is found at Asn-1608, Asn-1706, Asn-1733, Asn-1809, Asn-1854, Asn-1894, Asn-1986, Asn-2010, Asn-2054, Asn-2069, Asn-2076, and Asn-2092. The chain crosses the membrane as a helical span at residues 2138–2158; it reads AVVVPILFLILLSLGVGFAIL. Residues 2159–2214 are Cytoplasmic-facing; sequence YTKHRRLQSSFTAFANSHYSSRLGSAIFSSGDDLGEDDEDAPMITGFSDDVPMVIA. The Potential nuclear localization signal for the C-terminal fragment generated by PSEN1 signature appears at 2161–2164; it reads KHRR. The short motif at 2172–2177 is the Endocytosis signal element; the sequence is FANSHY. Positions 2190 to 2214 are required for efficient Golgi apparatus - endosome sorting; the sequence is DDLGEDDEDAPMITGFSDDVPMVIA. The interval 2201–2214 is required for interaction with GGA1 and GGA2; sequence MITGFSDDVPMVIA. The residue at position 2206 (Ser-2206) is a Phosphoserine; by ROCK2. The DXXLL motif involved in the interaction with GGA1 motif lies at 2208–2212; sequence DVPMV.

This sequence belongs to the VPS10-related sortilin family. SORL1 subfamily. As to quaternary structure, after maturation cleavage, interacts (via N-terminus) with its own propeptide; this interaction prevents interaction with other ligands, including CRLF1, GDNF, GFRA1, IL6 and IL6R. Interacts (via N-terminal ectodomain) with APP, forming a 1:1 stoichiometric complex, including with isoforms APP695, APP751 and APP770; this interaction retains APP in the trans-Golgi network and reduces processing into soluble APP-alpha and amyloid-beta peptides. Also interacts with APP C-terminal fragment C99 and with Abeta40. Interacts with beta-secretase BACE1/BACE; this interaction may affect BACE1-binding to APP and hence reduce BACE1-dependent APP cleavage. Interacts with LRPAP1/RAP. Interacts (via C-terminal cytosolic domain) with GGA1 and GGA2 (via N-terminal VHS domain). Interacts with PACS1. May interact (via the N-terminal ectodomain) with the morphogenetic neuropeptide, also called head activator or HA; this interaction is impaired in the presence of propeptide. Interacts with neurotensin/NTS. Interacts (via the N-terminal ectodomain) with PDGFB homodimer. Interacts (via N-terminal ectodomain) with the uPA receptor PLAUR; this interaction decreases PLAUR internalization. Interacts (via N-terminal ectodomain) with uPA/PLAU and PAI1/SERPINE1, either individually or in complex with each other, leading to endocytosis; this interaction is abolished in the presence of LRPAP1. Also interacts with the ternary complex composed of PLAUR-PLAU-PAI1. Also interacts with tPA/PLAT either alone or in complex with SERPINE1. Interacts (via C-terminus) with AP-1 and AP-2 complexes. Interacts with BMPR1A and BMPR1B. Interacts with lipoprotein lipase LPL; this interaction is optimal in slightly acidic conditions. Interacts (via N-terminal ectodomain) with GDNF (via propeptide) and GDNF receptor alpha-1/GFRA1, either individually or in complex with each other. The interaction with GDNF occurs mostly intracellularly. Also interacts with other GDNF receptor alpha family members, including GFRA2, GFRA3 and GFRA4. Interacts with the insulin receptor INSR; this interaction strongly increases the surface exposure of INSR. Interacts (via cytosolic C-terminus) with STK39/SPAK. Interacts (via N-terminal ectodomain) with the heterodimeric complex CRLF1-CLC; within this complex, the interaction is mediated predominantly by the CRLF1 moiety. Interacts with CNTFR, as well as with the tripartite signaling complex formed by CRLF1, CLC and CNTFR. Interacts (via N-terminal ectodomain) with IL6; this interaction leads to IL6 internalization and lysosomal degradation. Binding of SOLRL1 secreted N-terminal ectodomain to IL6 may increase IL6 trans signaling. Interacts with secreted IL6R; this interaction leads to IL6R internalization. Also interacts with transmembrane IL6R; this interaction does not affect IL6R subcellular location. Interacts with APOE. Interacts with apolipoprotein E-rich beta-VLDL. Interacts with APOA5; this interaction leads to APOA5 internalization and is abolished by heparin. Interaction with APOA5 results in enhanced binding to chylomicrons. Interacts with ROCK2. Interacts (via cytosolic C-terminus) with PPP3CB/calcineurin A beta. Interacts with NTRK2/TRKB; this interaction facilitates NTRK2 trafficking between synaptic plasma membranes, postsynaptic densities and cell soma, hence positively regulates BDNF signaling. Interacts (via cytosolic C-terminus) with HSPA12A in an ADP-dependent manner; this interaction affects SORL1 internalization and subcellular localization. Interacts (via N-terminal ectodomain) with ERBB2/HER2. In terms of processing, within the Golgi apparatus, the propeptide may be cleaved off by FURIN or a furin-like protease. After cleavage, the propeptide interacts with the mature protein N-terminus, preventing the association with other ligands. At the cell surface, partially subjected to proteolytic shedding that releases the ectodomain in the extracellular milieu. The shedding may be catalyzed by ADAM17/TACE. Following shedding, PSEN1/presenilin-1 cleaves the remaining transmembrane fragment and catalyzes the release of a C-terminal fragment in the cytosol and of a soluble N-terminal beta fragment in the extracellular milieu. The C-terminal cytosolic fragment localizes to the nucleus. Post-translationally, phosphorylation at Ser-2206 facilitates the interaction with GGA1. As to expression, highly expressed in brain (at protein level). Most abundant in the cerebellum, cerebral cortex and occipital pole; low levels in the putamen and thalamus. Expression is significantly reduced in the frontal cortex of patients suffering from Alzheimer disease. Also expressed in spinal cord, spleen, testis, prostate, ovary, thyroid and lymph nodes.

The protein resides in the golgi apparatus membrane. It localises to the golgi apparatus. The protein localises to the trans-Golgi network membrane. It is found in the endosome membrane. Its subcellular location is the early endosome membrane. The protein resides in the recycling endosome membrane. It localises to the endoplasmic reticulum membrane. The protein localises to the endosome. It is found in the multivesicular body membrane. Its subcellular location is the cell membrane. The protein resides in the cytoplasmic vesicle. It localises to the secretory vesicle membrane. The protein localises to the secreted. Functionally, sorting receptor that directs several proteins to their correct location within the cell. Along with AP-1 complex, involved Golgi apparatus - endosome sorting. Sorting receptor for APP, regulating its intracellular trafficking and processing into amyloidogenic-beta peptides. Retains APP in the trans-Golgi network, hence preventing its transit through late endosomes where amyloid beta peptides Abeta40 and Abeta42 are generated. May also sort newly produced amyloid-beta peptides to lysosomes for catabolism. Does not affect APP trafficking from the endoplasmic reticulum to Golgi compartments. Sorting receptor for the BDNF receptor NTRK2/TRKB that facilitates NTRK2 trafficking between synaptic plasma membranes, postsynaptic densities and cell soma, hence positively regulates BDNF signaling by controlling the intracellular location of its receptor. Sorting receptor for GDNF that promotes GDNF regulated, but not constitutive secretion. Sorting receptor for the GDNF-GFRA1 complex, directing it from the cell surface to endosomes. GDNF is then targeted to lysosomes and degraded, while its receptor GFRA1 recycles back to the cell membrane, resulting in a GDNF clearance pathway. The SORL1-GFRA1 complex further targets RET for endocytosis, but not for degradation, affecting GDNF-induced neurotrophic activities. Sorting receptor for ERBB2/HER2. Regulates ERBB2 subcellular distribution by promoting its recycling after internalization from endosomes back to the plasma membrane, hence stimulating phosphoinositide 3-kinase (PI3K)-dependent ERBB2 signaling. In ERBB2-dependent cancer cells, promotes cell proliferation. Sorting receptor for lipoprotein lipase LPL. Promotes LPL localization to endosomes and later to the lysosomes, leading to degradation of newly synthesized LPL. Potential sorting receptor for APOA5, inducing APOA5 internalization to early endosomes, then to late endosomes, wherefrom a portion is sent to lysosomes and degradation, another portion is sorted to the trans-Golgi network. Sorting receptor for the insulin receptor INSR. Promotes recycling of internalized INSR via the Golgi apparatus back to the cell surface, thereby preventing lysosomal INSR catabolism, increasing INSR cell surface expression and strengthening insulin signal reception in adipose tissue. Does not affect INSR internalization. Plays a role in renal ion homeostasis, controlling the phospho-regulation of SLC12A1/NKCC2 by STK39/SPAK kinase and PPP3CB/calcineurin A beta phosphatase, possibly through intracellular sorting of STK39 and PPP3CB. Stimulates, via the N-terminal ectodomain, the proliferation and migration of smooth muscle cells, possibly by increasing cell surface expression of the urokinase receptor uPAR/PLAUR. This may promote extracellular matrix proteolysis and hence facilitate cell migration. By acting on the migration of intimal smooth muscle cells, may accelerate intimal thickening following vascular injury. Promotes adhesion of monocytes. Stimulates proliferation and migration of monocytes/macrophages. Through its action on intimal smooth muscle cells and macrophages, may accelerate intimal thickening and macrophage foam cell formation in the process of atherosclerosis. Regulates hypoxia-enhanced adhesion of hematopoietic stem and progenitor cells to the bone marrow stromal cells via a PLAUR-mediated pathway. This function is mediated by the N-terminal ectodomain. Metabolic regulator, which functions to maintain the adequate balance between lipid storage and oxidation in response to changing environmental conditions, such as temperature and diet. The N-terminal ectodomain negatively regulates adipose tissue energy expenditure, acting through the inhibition the BMP/Smad pathway. May regulate signaling by the heterodimeric neurotrophic cytokine CLCF1-CRLF1 bound to the CNTFR receptor by promoting the endocytosis of the tripartite complex CLCF1-CRLF1-CNTFR and lysosomal degradation. May regulate IL6 signaling, decreasing cis signaling, possibly by interfering with IL6-binding to membrane-bound IL6R, while up-regulating trans signaling via soluble IL6R. In Homo sapiens (Human), this protein is Sortilin-related receptor (SORL1).